The following is a 164-amino-acid chain: SsrA-binding protein (164 aa).

This sequence belongs to the SmpB family.

It localises to the cytoplasm. In terms of biological role, required for rescue of stalled ribosomes mediated by trans-translation. Binds to transfer-messenger RNA (tmRNA), required for stable association of tmRNA with ribosomes. tmRNA and SmpB together mimic tRNA shape, replacing the anticodon stem-loop with SmpB. tmRNA is encoded by the ssrA gene; the 2 termini fold to resemble tRNA(Ala) and it encodes a 'tag peptide', a short internal open reading frame. During trans-translation Ala-aminoacylated tmRNA acts like a tRNA, entering the A-site of stalled ribosomes, displacing the stalled mRNA. The ribosome then switches to translate the ORF on the tmRNA; the nascent peptide is terminated with the 'tag peptide' encoded by the tmRNA and targeted for degradation. The ribosome is freed to recommence translation, which seems to be the essential function of trans-translation. The chain is SsrA-binding protein from Shewanella sediminis (strain HAW-EB3).